Reading from the N-terminus, the 183-residue chain is UPF0316 protein BcerKBAB4_3093 (183 aa).

3 helical membrane passes run 6–26, 32–52, and 58–78; these read LIFVLQIIYVPTLTIRTILLV, SAAGVGLLEGAIYIVSLGIVF, and WMNIVAYVIGFSAGLLLGGYI.

The protein belongs to the UPF0316 family.

The protein resides in the cell membrane. The protein is UPF0316 protein BcerKBAB4_3093 of Bacillus mycoides (strain KBAB4) (Bacillus weihenstephanensis).